A 308-amino-acid chain; its full sequence is Protein translocase subunit SecF (308 aa).

Helical transmembrane passes span 12-32 (YFIFSTFMILFSLFSIFTKGF), 127-147 (AKNALWALALGSILILIYITI), 152-172 (IYALSSVLALLHDVLVTIGFI), 182-202 (PFIAAILTILGYSMNDTIVIF), 234-254 (VYTSLTTLLALAALLIFGGST), and 262-282 (LLVGIVYGTYSSIWLASPLVY).

This sequence belongs to the SecD/SecF family. SecF subfamily. In terms of assembly, forms a complex with SecD. Part of the essential Sec protein translocation apparatus which comprises SecA, SecYEG and auxiliary proteins SecDF. Other proteins may also be involved.

The protein resides in the cell inner membrane. Its function is as follows. Part of the Sec protein translocase complex. Interacts with the SecYEG preprotein conducting channel. SecDF uses the proton motive force (PMF) to complete protein translocation after the ATP-dependent function of SecA. In Sebaldella termitidis (strain ATCC 33386 / NCTC 11300), this protein is Protein translocase subunit SecF.